Reading from the N-terminus, the 313-residue chain is Ribosomal RNA small subunit methyltransferase H (313 aa).

S-adenosyl-L-methionine-binding positions include 35–37 (GGH), Asp-55, Phe-80, Asp-102, and Gln-109.

It belongs to the methyltransferase superfamily. RsmH family.

It localises to the cytoplasm. It catalyses the reaction cytidine(1402) in 16S rRNA + S-adenosyl-L-methionine = N(4)-methylcytidine(1402) in 16S rRNA + S-adenosyl-L-homocysteine + H(+). Functionally, specifically methylates the N4 position of cytidine in position 1402 (C1402) of 16S rRNA. The sequence is that of Ribosomal RNA small subunit methyltransferase H from Shewanella putrefaciens (strain CN-32 / ATCC BAA-453).